Reading from the N-terminus, the 471-residue chain is Cytochrome P450 monooxygenase afvE (471 aa).

Residues 265–285 traverse the membrane as a helical segment; the sequence is IIFYHFELSTPVAFFIIFAVY. Cys410 is a binding site for heme.

It belongs to the cytochrome P450 family. The cofactor is heme.

It is found in the membrane. Its pathway is secondary metabolite biosynthesis. Its function is as follows. Cytochrome P450 monooxygenase; part of the gene cluster that mediates the biosynthesis of aflavarin, a bicoumarin that exhibits anti-insectan activity against the fungivorous beetle C.hemipterus. This is Cytochrome P450 monooxygenase afvE from Aspergillus flavus (strain ATCC 200026 / FGSC A1120 / IAM 13836 / NRRL 3357 / JCM 12722 / SRRC 167).